Reading from the N-terminus, the 395-residue chain is Phosphoglycerate kinase (395 aa).

Residues 22 to 24 (DLN), Arg-37, 60 to 63 (HFGR), Arg-116, and Arg-149 contribute to the substrate site. ATP-binding positions include Lys-199, Glu-322, and 352–355 (GGDT).

The protein belongs to the phosphoglycerate kinase family. Monomer.

It is found in the cytoplasm. The enzyme catalyses (2R)-3-phosphoglycerate + ATP = (2R)-3-phospho-glyceroyl phosphate + ADP. It participates in carbohydrate degradation; glycolysis; pyruvate from D-glyceraldehyde 3-phosphate: step 2/5. This Novosphingobium aromaticivorans (strain ATCC 700278 / DSM 12444 / CCUG 56034 / CIP 105152 / NBRC 16084 / F199) protein is Phosphoglycerate kinase.